We begin with the raw amino-acid sequence, 504 residues long: Probable cytochrome P450 6a21 (504 aa).

Cysteine 449 is a heme binding site.

This sequence belongs to the cytochrome P450 family. Heme serves as cofactor.

It is found in the endoplasmic reticulum membrane. It localises to the microsome membrane. Functionally, may be involved in the metabolism of insect hormones and in the breakdown of synthetic insecticides. This Drosophila melanogaster (Fruit fly) protein is Probable cytochrome P450 6a21 (Cyp6a21).